Reading from the N-terminus, the 731-residue chain is Catalase-peroxidase (731 aa).

Residues 98–227 constitute a cross-link (tryptophyl-tyrosyl-methioninium (Trp-Tyr) (with M-254)); it reads WHAAGTYRTA…LAAIQMGLIY (130 aa). The Proton acceptor role is filled by His-99. Positions 227–254 form a cross-link, tryptophyl-tyrosyl-methioninium (Tyr-Met) (with W-98); that stretch reads YVNPEGPQGNPHDDEGMARDMKETFKRM. Residue His-269 coordinates heme b.

This sequence belongs to the peroxidase family. Peroxidase/catalase subfamily. As to quaternary structure, homodimer or homotetramer. Heme b serves as cofactor. In terms of processing, formation of the three residue Trp-Tyr-Met cross-link is important for the catalase, but not the peroxidase activity of the enzyme.

It carries out the reaction H2O2 + AH2 = A + 2 H2O. The enzyme catalyses 2 H2O2 = O2 + 2 H2O. Its function is as follows. Bifunctional enzyme with both catalase and broad-spectrum peroxidase activity. This is Catalase-peroxidase from Sphingopyxis alaskensis (strain DSM 13593 / LMG 18877 / RB2256) (Sphingomonas alaskensis).